A 61-amino-acid chain; its full sequence is Small ribosomal subunit protein uS14 (61 aa).

Cysteine 24, cysteine 27, cysteine 40, and cysteine 43 together coordinate Zn(2+).

It belongs to the universal ribosomal protein uS14 family. Zinc-binding uS14 subfamily. As to quaternary structure, part of the 30S ribosomal subunit. Contacts proteins S3 and S10. It depends on Zn(2+) as a cofactor.

Functionally, binds 16S rRNA, required for the assembly of 30S particles and may also be responsible for determining the conformation of the 16S rRNA at the A site. This is Small ribosomal subunit protein uS14 from Rubrobacter xylanophilus (strain DSM 9941 / JCM 11954 / NBRC 16129 / PRD-1).